The primary structure comprises 201 residues: ATP-dependent Clp protease proteolytic subunit (201 aa).

Ser101 functions as the Nucleophile in the catalytic mechanism. His126 is a catalytic residue.

It belongs to the peptidase S14 family. As to quaternary structure, component of the chloroplastic Clp protease core complex.

The protein resides in the plastid. It localises to the chloroplast stroma. The catalysed reaction is Hydrolysis of proteins to small peptides in the presence of ATP and magnesium. alpha-casein is the usual test substrate. In the absence of ATP, only oligopeptides shorter than five residues are hydrolyzed (such as succinyl-Leu-Tyr-|-NHMec, and Leu-Tyr-Leu-|-Tyr-Trp, in which cleavage of the -Tyr-|-Leu- and -Tyr-|-Trp bonds also occurs).. Cleaves peptides in various proteins in a process that requires ATP hydrolysis. Has a chymotrypsin-like activity. Plays a major role in the degradation of misfolded proteins. The sequence is that of ATP-dependent Clp protease proteolytic subunit from Chaetosphaeridium globosum (Charophycean green alga).